Consider the following 411-residue polypeptide: Methyl-CpG-binding domain protein 2 (411 aa).

Residues 1 to 149 (MRAHPGGGRC…GPRATESGKR (149 aa)) form a required for interaction with DHX9 and PRMT5 region. The disordered stretch occupies residues 1–158 (MRAHPGGGRC…RMDCPALPPG (158 aa)). The segment covering 77–95 (GRGRGRGRGRGRGRGRGRG) has biased composition (basic residues). Positions 98–121 (PSGGSGLGGDGGGCGGGGSGGGGA) are enriched in gly residues. One can recognise an MBD domain in the interval 145–213 (ESGKRMDCPA…SSFDFRTGKM (69 aa)). Phosphoserine is present on Ser181. Residues 214 to 241 (MPSKLQKNKQRLRNDPLNQNKGKPDLNT) are disordered. Residues 229–241 (PLNQNKGKPDLNT) are compositionally biased toward polar residues. The residue at position 407 (Ser407) is a Phosphoserine.

As to quaternary structure, heterodimer with MBD3 (via N-terminus). Component of the MeCP1 complex that contains HDAC1 and HDAC2. Component of the nucleosome remodeling and deacetylase (NuRD) repressor complex, composed of core proteins MTA1, MTA2, MTA3, RBBP4, RBBP7, HDAC1, HDAC2, MBD2, MBD3, and peripherally associated proteins CDK2AP1, CDK2AP2, GATAD2A, GATAD2B, CHD3, CHD4 and CHD5. The exact stoichiometry of the NuRD complex is unknown, and some subunits such as MBD2 and MBD3, GATAD2A and GATAD2B, and CHD3, CHD4 and CHD5 define mutually exclusive NuRD complexes. Interacts with CDK2AP1. Interacts with DHX9. Interacts with DNMT1. Interacts with GATAD2A/p66-alpha. Interacts with GATAD2B/p66-beta. Interacts with GPN1. Interacts with MIZF. Interacts with PRMT5. Interacts with SIN3A. Interacts with SPHK2. As to expression, highly expressed in brain, heart, kidney, stomach, testis and placenta.

It is found in the nucleus. Its subcellular location is the chromosome. Functionally, binds CpG islands in promoters where the DNA is methylated at position 5 of cytosine within CpG dinucleotides. Binds hemimethylated DNA as well. Recruits histone deacetylases and DNA methyltransferases to chromatin. Acts as a component of the histone deacetylase NuRD complex which participates in the remodeling of chromatin. Acts as a transcriptional repressor and plays a role in gene silencing. Functions as a scaffold protein, targeting GATAD2A and GATAD2B to chromatin to promote repression. May enhance the activation of some unmethylated cAMP-responsive promoters. The sequence is that of Methyl-CpG-binding domain protein 2 from Homo sapiens (Human).